Consider the following 1521-residue polypeptide: Suppressor of Ty 6 homolog (1521 aa).

Residues 1-204 (MDFIDNQAEE…EGAEDDARDV (204 aa)) form a disordered region. A compositionally biased stretch (basic residues) spans 26 to 41 (KKMKMAKDKLKKKKKV). The short motif at 26–42 (KKMKMAKDKLKKKKKVV) is the Nuclear localization signal element. 2 stretches are compositionally biased toward acidic residues: residues 45 to 56 (SDEDEDDEDDEE) and 67 to 76 (ADEDDEEEDA). The span at 77 to 89 (RSEKSDRSRRSEI) shows a compositional bias: basic and acidic residues. Positions 90-103 (NDELDDEDLDLIDE) are enriched in acidic residues. Residues 127–149 (PIRRSNQDDDDLQSERGSDDGDK) are compositionally biased toward basic and acidic residues. The span at 167–177 (RSEDDFIEDDG) shows a compositional bias: acidic residues. Residues 1182-1251 (LNAGRPGGCV…EKFSILLSCK (70 aa)) form the S1 motif domain. Residues 1299–1388 (HPNFHNVSYE…IARFVLPMIQ (90 aa)) enclose the SH2 domain. The interval 1490 to 1521 (GIRSSLSYRPTGRTGPPPSAPYQQPPQQQYYR) is disordered. The span at 1504 to 1513 (GPPPSAPYQQ) shows a compositional bias: pro residues.

The protein belongs to the SPT6 family. Interacts with glp-1 and lin-12.

It localises to the nucleus. Histone H3-H4 chaperone that plays a role in maintenance of chromatin structure during RNA polymerase II transcription elongation. May be required for several aspects of morphogenesis of C.briggsae, including regulation of division in the germline and gut and specification of ventral-uterine precursor cell fate. The sequence is that of Suppressor of Ty 6 homolog (emb-5) from Caenorhabditis briggsae.